Here is a 485-residue protein sequence, read N- to C-terminus: Cholesterol 16,22-dihydroxylase CYP90G4 (485 aa).

The helical transmembrane segment at 4 to 24 (VVILFFLFPTLLVLVVAVLGL) threads the bilayer. C432 is a binding site for heme.

The protein belongs to the cytochrome P450 family. In terms of tissue distribution, mainly expressed in leaves and, at low levels, in roots and stems.

Its subcellular location is the membrane. It catalyses the reaction cholesterol + 2 reduced [NADPH--hemoprotein reductase] + 2 O2 = (16S,22S)-dihydroxycholesterol + 2 oxidized [NADPH--hemoprotein reductase] + 2 H2O + 2 H(+). Its pathway is steroid metabolism; cholesterol metabolism. In terms of biological role, involved in the biosynthesis of spiroketal steroid and saponin natural products from cholesterol such as diosgenin and analogs (e.g. furostanol and spirostanol), plant defense compounds used as main precursors for the industrial production of steroid hormones. During the 5,6-spiroketalization of cholesterol, catalyzes the hydroxylation of cholesterol to form 16S,22S-dihydroxycholesterol and, possibly, the subsequent conversion of 16S,22S-dihydroxycholesterol into 16-oxo-22-hydroxy-cholesterol and 16-hydroxy-22-oxo-cholesterol. 16-hydroxy-22-oxo-cholesterol submit a spontaneous reaction leading to the production of furostanol-type steroid diastereomers, precursors of diosgenin. The sequence is that of Cholesterol 16,22-dihydroxylase CYP90G4 from Paris polyphylla (Daiswa polyphylla).